A 635-amino-acid polypeptide reads, in one-letter code: 1-deoxy-D-xylulose-5-phosphate synthase (635 aa).

Residues His-74 and 115–117 (AHS) contribute to the thiamine diphosphate site. Asp-146 contacts Mg(2+). Thiamine diphosphate contacts are provided by residues 147–148 (GA), Asn-176, Tyr-283, and Glu-365. Asn-176 contributes to the Mg(2+) binding site.

This sequence belongs to the transketolase family. DXPS subfamily. Homodimer. It depends on Mg(2+) as a cofactor. Thiamine diphosphate is required as a cofactor.

It catalyses the reaction D-glyceraldehyde 3-phosphate + pyruvate + H(+) = 1-deoxy-D-xylulose 5-phosphate + CO2. It functions in the pathway metabolic intermediate biosynthesis; 1-deoxy-D-xylulose 5-phosphate biosynthesis; 1-deoxy-D-xylulose 5-phosphate from D-glyceraldehyde 3-phosphate and pyruvate: step 1/1. In terms of biological role, catalyzes the acyloin condensation reaction between C atoms 2 and 3 of pyruvate and glyceraldehyde 3-phosphate to yield 1-deoxy-D-xylulose-5-phosphate (DXP). The sequence is that of 1-deoxy-D-xylulose-5-phosphate synthase from Polaromonas sp. (strain JS666 / ATCC BAA-500).